Reading from the N-terminus, the 430-residue chain is Long-chain specific acyl-CoA dehydrogenase, mitochondrial (430 aa).

Residues 1–30 (MAARLLLRSLRVLKARSAPRPPPSARCSHS) constitute a mitochondrion transit peptide. A disordered region spans residues 17 to 39 (SAPRPPPSARCSHSGAEARLETP). At Lys42 the chain carries N6-acetyllysine. A phosphoserine mark is found at Ser54 and Ser55. 2 positions are modified to N6-acetyllysine; alternate: Lys66 and Lys81. 2 positions are modified to N6-succinyllysine; alternate: Lys66 and Lys81. 2 positions are modified to N6-acetyllysine: Lys92 and Lys95. Lys165 is modified (N6-succinyllysine). 170–179 (IAMTEPGAGS) contacts FAD. Ser179 contributes to the substrate binding site. Ser191 bears the Phosphoserine mark. Residue 203-205 (FIT) coordinates FAD. 227–228 (AH) contacts substrate. Residue Lys240 is modified to N6-succinyllysine. Residues Lys254 and Lys279 each carry the N6-acetyllysine; alternate modification. Residues Lys254 and Lys279 each carry the N6-succinyllysine; alternate modification. Residues Tyr282 and 289–292 (PQER) contribute to the substrate site. Glu291 functions as the Proton acceptor in the catalytic mechanism. Arg317 serves as a coordination point for FAD. An N6-acetyllysine modification is found at Lys318. An N6-acetyllysine; alternate modification is found at Lys322. Position 322 is an N6-succinyllysine; alternate (Lys322). Gln328 serves as a coordination point for FAD. An N6-acetyllysine modification is found at Lys358. Ser362 is subject to Phosphoserine. Residue 385 to 389 (QLHGG) coordinates FAD. 412–413 (GG) contacts substrate. 414 to 416 (TNE) is a binding site for FAD.

Belongs to the acyl-CoA dehydrogenase family. Homotetramer. The cofactor is FAD. In terms of processing, acetylation at Lys-318 and Lys-322 in proximity of the cofactor-binding sites strongly reduces catalytic activity. These sites are deacetylated by SIRT3. As to expression, expressed in heart, skeletal muscle, kidney, and brain. Expressed in liver (at protein level).

The protein resides in the mitochondrion matrix. The enzyme catalyses a long-chain 2,3-saturated fatty acyl-CoA + oxidized [electron-transfer flavoprotein] + H(+) = a long-chain (2E)-enoyl-CoA + reduced [electron-transfer flavoprotein]. It carries out the reaction oxidized [electron-transfer flavoprotein] + hexadecanoyl-CoA + H(+) = (2E)-hexadecenoyl-CoA + reduced [electron-transfer flavoprotein]. The catalysed reaction is hexanoyl-CoA + oxidized [electron-transfer flavoprotein] + H(+) = (2E)-hexenoyl-CoA + reduced [electron-transfer flavoprotein]. It catalyses the reaction octanoyl-CoA + oxidized [electron-transfer flavoprotein] + H(+) = (2E)-octenoyl-CoA + reduced [electron-transfer flavoprotein]. The enzyme catalyses decanoyl-CoA + oxidized [electron-transfer flavoprotein] + H(+) = (2E)-decenoyl-CoA + reduced [electron-transfer flavoprotein]. It carries out the reaction dodecanoyl-CoA + oxidized [electron-transfer flavoprotein] + H(+) = (2E)-dodecenoyl-CoA + reduced [electron-transfer flavoprotein]. The catalysed reaction is tetradecanoyl-CoA + oxidized [electron-transfer flavoprotein] + H(+) = (2E)-tetradecenoyl-CoA + reduced [electron-transfer flavoprotein]. It catalyses the reaction octadecanoyl-CoA + oxidized [electron-transfer flavoprotein] + H(+) = (2E)-octadecenoyl-CoA + reduced [electron-transfer flavoprotein]. The enzyme catalyses eicosanoyl-CoA + oxidized [electron-transfer flavoprotein] + H(+) = (2E)-eicosenoyl-CoA + reduced [electron-transfer flavoprotein]. It carries out the reaction docosanoyl-CoA + oxidized [electron-transfer flavoprotein] + H(+) = (2E)-docosenoyl-CoA + reduced [electron-transfer flavoprotein]. The catalysed reaction is tetracosanoyl-CoA + oxidized [electron-transfer flavoprotein] + H(+) = (2E)-tetracosenoyl-CoA + reduced [electron-transfer flavoprotein]. It catalyses the reaction (5E)-tetradecenoyl-CoA + oxidized [electron-transfer flavoprotein] + H(+) = (2E,5E)-tetradecadienoyl-CoA + reduced [electron-transfer flavoprotein]. The enzyme catalyses (5Z)-tetradecenoyl-CoA + oxidized [electron-transfer flavoprotein] + H(+) = (2E,5Z)-tetradecadienoyl-CoA + reduced [electron-transfer flavoprotein]. It carries out the reaction oxidized [electron-transfer flavoprotein] + (9Z)-octadecenoyl-CoA + H(+) = (2E,9Z)-octadecadienoyl-CoA + reduced [electron-transfer flavoprotein]. It participates in lipid metabolism; mitochondrial fatty acid beta-oxidation. Its function is as follows. Long-chain specific acyl-CoA dehydrogenase is one of the acyl-CoA dehydrogenases that catalyze the first step of mitochondrial fatty acid beta-oxidation, an aerobic process breaking down fatty acids into acetyl-CoA and allowing the production of energy from fats. The first step of fatty acid beta-oxidation consists in the removal of one hydrogen from C-2 and C-3 of the straight-chain fatty acyl-CoA thioester, resulting in the formation of trans-2-enoyl-CoA. Among the different mitochondrial acyl-CoA dehydrogenases, long-chain specific acyl-CoA dehydrogenase can act on saturated and unsaturated acyl-CoAs with 6 to 24 carbons with a preference for 8 to 18 carbons long primary chains. This chain is Long-chain specific acyl-CoA dehydrogenase, mitochondrial, found in Mus musculus (Mouse).